The sequence spans 295 residues: Excinuclease cho (295 aa).

The 76-residue stretch at T33–K108 folds into the GIY-YIG domain.

In terms of biological role, incises the DNA at the 3' side of a lesion during nucleotide excision repair. Incises the DNA farther away from the lesion than UvrC. Not able to incise the 5' site of a lesion. In vitro, the incision activity of Cho is UvrA and UvrB dependent. When a lesion remains because UvrC is not able to induce the 3' incision, Cho incises the DNA. Then UvrC makes the 5' incision. The combined action of Cho and UvrC broadens the substrate range of nucleotide excision repair. In Escherichia coli (strain K12), this protein is Excinuclease cho (cho).